Reading from the N-terminus, the 310-residue chain is MEPGNYTVVTEVILLGFTEDAIIRAILFIVFLIIYSVTLMGNASIIMLIRRSPQLHTPMYLLLSHLAFVDIGYSSSVTPIMLKGFLRKETFILVSGCVAQLCSVVTFGSTECFLLAAMAYDRYVAICSPLLYATQMSSTVCILLVGASYLGGCVNAWTFTGCLLNLSFCRPNKVNHFFCDYSPLLKISCSHDFSSEVIPAISSGSIIVVTVFIIALSYVYILVSILKMRSTEGRQKAFSTCTSHLTAVTLFYGTITFIYVMPKSSYSTDQNKVVSVFYTVVIPMLNPIIYSLRNKDVKEAMKKLMANTHH.

Residues 1-25 (MEPGNYTVVTEVILLGFTEDAIIRA) are Extracellular-facing. N-linked (GlcNAc...) asparagine glycosylation is present at Asn5. Residues 26 to 46 (ILFIVFLIIYSVTLMGNASII) form a helical membrane-spanning segment. The Cytoplasmic segment spans residues 47–54 (MLIRRSPQ). Residues 55–75 (LHTPMYLLLSHLAFVDIGYSS) form a helical membrane-spanning segment. Over 76–99 (SVTPIMLKGFLRKETFILVSGCVA) the chain is Extracellular. A disulfide bridge connects residues Cys97 and Cys189. The helical transmembrane segment at 100-120 (QLCSVVTFGSTECFLLAAMAY) threads the bilayer. The Cytoplasmic portion of the chain corresponds to 121–133 (DRYVAICSPLLYA). A helical membrane pass occupies residues 134 to 154 (TQMSSTVCILLVGASYLGGCV). The Extracellular segment spans residues 155–196 (NAWTFTGCLLNLSFCRPNKVNHFFCDYSPLLKISCSHDFSSE). Asn165 carries an N-linked (GlcNAc...) asparagine glycan. A helical transmembrane segment spans residues 197–217 (VIPAISSGSIIVVTVFIIALS). The Cytoplasmic segment spans residues 218-237 (YVYILVSILKMRSTEGRQKA). The helical transmembrane segment at 238–258 (FSTCTSHLTAVTLFYGTITFI) threads the bilayer. Over 259-271 (YVMPKSSYSTDQN) the chain is Extracellular. A helical transmembrane segment spans residues 272-292 (KVVSVFYTVVIPMLNPIIYSL). Residues 293-310 (RNKDVKEAMKKLMANTHH) lie on the Cytoplasmic side of the membrane.

The protein belongs to the G-protein coupled receptor 1 family.

The protein localises to the cell membrane. In terms of biological role, potential odorant receptor. The sequence is that of Olfactory receptor 5P80 from Mus musculus (Mouse).